Here is a 378-residue protein sequence, read N- to C-terminus: Chaperone protein DnaJ 2 (378 aa).

The J domain occupies D4–G68. Residues G128–R210 form a CR-type zinc finger. Residues C141, C144, C158, C161, C184, C187, C198, and C201 each contribute to the Zn(2+) site. CXXCXGXG motif repeat units lie at residues C141–G148, C158–G165, C184–G191, and C198–G205.

It belongs to the DnaJ family. As to quaternary structure, homodimer. Zn(2+) serves as cofactor.

The protein localises to the cytoplasm. Functionally, participates actively in the response to hyperosmotic and heat shock by preventing the aggregation of stress-denatured proteins and by disaggregating proteins, also in an autonomous, DnaK-independent fashion. Unfolded proteins bind initially to DnaJ; upon interaction with the DnaJ-bound protein, DnaK hydrolyzes its bound ATP, resulting in the formation of a stable complex. GrpE releases ADP from DnaK; ATP binding to DnaK triggers the release of the substrate protein, thus completing the reaction cycle. Several rounds of ATP-dependent interactions between DnaJ, DnaK and GrpE are required for fully efficient folding. Also involved, together with DnaK and GrpE, in the DNA replication of plasmids through activation of initiation proteins. This Mycobacterium leprae (strain TN) protein is Chaperone protein DnaJ 2.